The primary structure comprises 236 residues: H2HPP isomerase (236 aa).

Cupin type-1 domains lie at 40–106 and 151–215; these read YVPP…AIDI and NIPG…SKSV. Residues histidine 50, histidine 52, glutamine 56, histidine 91, histidine 162, histidine 164, glutamine 168, and histidine 202 each contribute to the a divalent metal cation site. Tyrosine 223 is a substrate binding site.

In terms of assembly, monomer. Fe(2+) is required as a cofactor. Co(2+) serves as cofactor.

It localises to the cytoplasm. It catalyses the reaction 3-[(4R)-4-hydroxycyclohexa-1,5-dien-1-yl]-2-oxopropanoate = 3-[(1E,4R)-4-hydroxycyclohex-2-en-1-ylidene]pyruvate. It functions in the pathway antibiotic biosynthesis; bacilysin biosynthesis. In terms of biological role, part of the bacABCDEF operon responsible for the biosynthesis of the nonribosomally synthesized dipeptide antibiotic bacilysin, composed of L-alanine and L-anticapsin. Bacilysin is an irreversible inactivator of the glutaminase domain of glucosamine synthetase. BacB catalyzes the allylic isomerization of the endocyclic-delta(4),delta(8)-7R-dihydro-hydroxyphenylpyruvate (en-H2HPP) to generate a mixture of 3E,7R- and 3Z, 7R-olefins of the exocyclic-delta(3),delta(5)-dihydro-hydroxyphenylpyruvate (ex-H2HPP). The protein is H2HPP isomerase of Bacillus subtilis.